A 268-amino-acid chain; its full sequence is Putative ABC transporter ATP-binding protein MK0182 (268 aa).

Positions 1–229 constitute an ABC transporter domain; it reads MTHEYPDGTC…VDLIRESGLK (229 aa). Residue 29–36 coordinates ATP; that stretch reads GPNGSGKT.

It belongs to the ABC transporter superfamily.

Its subcellular location is the cell membrane. Probably part of an ABC transporter complex. Responsible for energy coupling to the transport system. The sequence is that of Putative ABC transporter ATP-binding protein MK0182 from Methanopyrus kandleri (strain AV19 / DSM 6324 / JCM 9639 / NBRC 100938).